A 368-amino-acid chain; its full sequence is Decarboxylase yanB (368 aa).

Positions 7, 9, and 159 each coordinate Zn(2+). Asn-169 carries N-linked (GlcNAc...) asparagine glycosylation. Residue Asp-283 participates in Zn(2+) binding. A helical transmembrane segment spans residues 339 to 359 (WGAFSACLLLPVGLSALYSVL).

It belongs to the metallo-dependent hydrolases superfamily. ACMSD family.

Its subcellular location is the membrane. It catalyses the reaction 6-methylsalicylate + H(+) = 3-methylphenol + CO2. It functions in the pathway secondary metabolite biosynthesis; terpenoid biosynthesis. In terms of biological role, decarboxylase; part of the gene cluster that mediates the biosynthesis of yanuthone D, a fungal isoprenoid epoxycyclohexenone that acts as an antibiotic against fungi and bacteria. The first step of the pathway is the synthesis of 6-methylsalicylic acid (6-MSA) by the polyketide synthase yanA. 6-MSA is then converted to m-cresol by the decarboxylase yanB. The cytochrome P450 monooxygenase yanC then catalyzes the oxidation of m-cresol to toluquinol. Epoxidation of toluquinol is then performed by the short chain dehydrogenase yanD, with the help of yanE, and a further prenylation by yanG leads to 7-deacetoxyyanuthone A. The next step is the hydroxylation of C-22 of 7-deacetoxyyanuthone A by the cytochrome P450 monooxygenase yanH to yield 22-deacetylyanuthone A. O-Mevalon transferase yanI then attaches mevalon to the hydroxyl group of 22-deacetylyanuthone A to produce yanuthone E. Finally, the FAD-dependent monooxygenase yanF oxidizes the hydroxyl group at C15 of yanuthone E to form yanuthone D. Furthermore, several branching points in the pathway lead to the production of yanuthones F and G from 7-deacetoxyyanuthone A; yanuthones H and I from 22-deacetylyanuthone A; and yanuthone J from yanuthone E. The protein is Decarboxylase yanB of Aspergillus niger (strain ATCC 1015 / CBS 113.46 / FGSC A1144 / LSHB Ac4 / NCTC 3858a / NRRL 328 / USDA 3528.7).